We begin with the raw amino-acid sequence, 188 residues long: Inosine triphosphate pyrophosphatase (188 aa).

Residue 9–14 (TGNAKK) coordinates ITP. Glu-39 serves as a coordination point for Mg(2+). Residues Lys-51, 67 to 68 (DT), Lys-84, 143 to 146 (FGWD), Lys-166, and 171 to 172 (HR) each bind ITP.

Belongs to the HAM1 NTPase family. In terms of assembly, homodimer. Mg(2+) is required as a cofactor. Mn(2+) serves as cofactor.

Its subcellular location is the cytoplasm. The catalysed reaction is ITP + H2O = IMP + diphosphate + H(+). It catalyses the reaction dITP + H2O = dIMP + diphosphate + H(+). The enzyme catalyses XTP + H2O = XMP + diphosphate + H(+). In terms of biological role, pyrophosphatase that hydrolyzes non-canonical purine nucleotides such as inosine triphosphate (ITP), deoxyinosine triphosphate (dITP) or xanthosine 5'-triphosphate (XTP) to their respective monophosphate derivatives. The enzyme does not distinguish between the deoxy- and ribose forms. Probably excludes non-canonical purines from RNA and DNA precursor pools, thus preventing their incorporation into RNA and DNA and avoiding chromosomal lesions. The protein is Inosine triphosphate pyrophosphatase of Aedes aegypti (Yellowfever mosquito).